We begin with the raw amino-acid sequence, 492 residues long: Ketol-acid reductoisomerase (NADP(+)) (492 aa).

In terms of domain architecture, KARI N-terminal Rossmann spans 14–208 (LDQLGRCRFM…GGHKAGVLES (195 aa)). NADP(+) is bound by residues 45–48 (CGAQ), R68, R76, S78, and 108–110 (DKQ). Residue H132 is part of the active site. An NADP(+)-binding site is contributed by G158. KARI C-terminal knotted domains lie at 209-344 (SFVA…NAPK) and 345-485 (YDGK…MTDM). Mg(2+) contacts are provided by D217, E221, E389, and E393. S414 is a binding site for substrate.

The protein belongs to the ketol-acid reductoisomerase family. The cofactor is Mg(2+).

The catalysed reaction is (2R)-2,3-dihydroxy-3-methylbutanoate + NADP(+) = (2S)-2-acetolactate + NADPH + H(+). The enzyme catalyses (2R,3R)-2,3-dihydroxy-3-methylpentanoate + NADP(+) = (S)-2-ethyl-2-hydroxy-3-oxobutanoate + NADPH + H(+). It functions in the pathway amino-acid biosynthesis; L-isoleucine biosynthesis; L-isoleucine from 2-oxobutanoate: step 2/4. The protein operates within amino-acid biosynthesis; L-valine biosynthesis; L-valine from pyruvate: step 2/4. In terms of biological role, involved in the biosynthesis of branched-chain amino acids (BCAA). Catalyzes an alkyl-migration followed by a ketol-acid reduction of (S)-2-acetolactate (S2AL) to yield (R)-2,3-dihydroxy-isovalerate. In the isomerase reaction, S2AL is rearranged via a Mg-dependent methyl migration to produce 3-hydroxy-3-methyl-2-ketobutyrate (HMKB). In the reductase reaction, this 2-ketoacid undergoes a metal-dependent reduction by NADPH to yield (R)-2,3-dihydroxy-isovalerate. The chain is Ketol-acid reductoisomerase (NADP(+)) from Haemophilus influenzae (strain PittGG).